The primary structure comprises 298 residues: N-acetylmuramic acid 6-phosphate etherase (298 aa).

Residues 55 to 218 (IHAQVSGGGR…STGLMIKSGK (164 aa)) form the SIS domain. Catalysis depends on Glu-83, which acts as the Proton donor. Glu-114 is an active-site residue.

The protein belongs to the GCKR-like family. MurNAc-6-P etherase subfamily. As to quaternary structure, homodimer.

The catalysed reaction is N-acetyl-D-muramate 6-phosphate + H2O = N-acetyl-D-glucosamine 6-phosphate + (R)-lactate. The protein operates within amino-sugar metabolism; 1,6-anhydro-N-acetylmuramate degradation. Its pathway is amino-sugar metabolism; N-acetylmuramate degradation. It participates in cell wall biogenesis; peptidoglycan recycling. Specifically catalyzes the cleavage of the D-lactyl ether substituent of MurNAc 6-phosphate, producing GlcNAc 6-phosphate and D-lactate. Together with AnmK, is also required for the utilization of anhydro-N-acetylmuramic acid (anhMurNAc) either imported from the medium or derived from its own cell wall murein, and thus plays a role in cell wall recycling. The polypeptide is N-acetylmuramic acid 6-phosphate etherase (Escherichia coli O17:K52:H18 (strain UMN026 / ExPEC)).